The following is a 109-amino-acid chain: U-scoloptoxin(16)-Cw1a (109 aa).

Positions 1-21 are cleaved as a signal peptide; the sequence is MNAVFIVFLSAILSYPHESFA.

This sequence belongs to the scoloptoxin-16 family. Post-translationally, contains 4 disulfide bonds. In terms of tissue distribution, expressed by the venom gland.

It localises to the secreted. This is U-scoloptoxin(16)-Cw1a from Cormocephalus westwoodi (Westwood's green centipede).